Here is a 412-residue protein sequence, read N- to C-terminus: L-cysteine:1D-myo-inositol 2-amino-2-deoxy-alpha-D-glucopyranoside ligase (412 aa).

Cys-43 is a Zn(2+) binding site. Residues 43–46 (CGIT), Thr-58, and 81–83 (NVT) each bind L-cysteinyl-5'-AMP. Residues 45 to 55 (ITPYDATHLGH) carry the 'HIGH' region motif. Positions 187–192 (ERGGDP) match the 'ERGGDP' region motif. Trp-227 contributes to the L-cysteinyl-5'-AMP binding site. Cys-231 is a Zn(2+) binding site. 249-251 (GSD) contributes to the L-cysteinyl-5'-AMP binding site. His-256 is a binding site for Zn(2+). An L-cysteinyl-5'-AMP-binding site is contributed by Ile-283. Residues 289-293 (KMSKS) carry the 'KMSKS' region motif.

This sequence belongs to the class-I aminoacyl-tRNA synthetase family. MshC subfamily. Monomer. Zn(2+) serves as cofactor.

It catalyses the reaction 1D-myo-inositol 2-amino-2-deoxy-alpha-D-glucopyranoside + L-cysteine + ATP = 1D-myo-inositol 2-(L-cysteinylamino)-2-deoxy-alpha-D-glucopyranoside + AMP + diphosphate + H(+). Catalyzes the ATP-dependent condensation of GlcN-Ins and L-cysteine to form L-Cys-GlcN-Ins. This chain is L-cysteine:1D-myo-inositol 2-amino-2-deoxy-alpha-D-glucopyranoside ligase, found in Saccharopolyspora erythraea (strain ATCC 11635 / DSM 40517 / JCM 4748 / NBRC 13426 / NCIMB 8594 / NRRL 2338).